The following is a 110-amino-acid chain: Protein NATD1 (110 aa).

One can recognise an N-acetyltransferase domain in the interval 19 to 109; that stretch reads EHDRQRRQFS…PLPQYLERLQ (91 aa).

Belongs to the NATD1 family. Expressed in the heart, testis, kidney and lung.

In Mus musculus (Mouse), this protein is Protein NATD1 (Natd1).